Reading from the N-terminus, the 359-residue chain is Protein RecA (359 aa).

77 to 84 (GPESSGKT) is a binding site for ATP.

It belongs to the RecA family.

The protein resides in the cytoplasm. Its function is as follows. Can catalyze the hydrolysis of ATP in the presence of single-stranded DNA, the ATP-dependent uptake of single-stranded DNA by duplex DNA, and the ATP-dependent hybridization of homologous single-stranded DNAs. It interacts with LexA causing its activation and leading to its autocatalytic cleavage. The sequence is that of Protein RecA from Paramagnetospirillum magneticum (strain ATCC 700264 / AMB-1) (Magnetospirillum magneticum).